The chain runs to 220 residues: Iron-sulfur cluster repair protein YtfE (220 aa).

Belongs to the RIC family. YtfE subfamily. Homodimer.

The protein resides in the cytoplasm. Functionally, di-iron-containing protein involved in the repair of iron-sulfur clusters damaged by oxidative and nitrosative stress conditions. This Salmonella choleraesuis (strain SC-B67) protein is Iron-sulfur cluster repair protein YtfE.